Consider the following 244-residue polypeptide: 1-(5-phosphoribosyl)-5-[(5-phosphoribosylamino)methylideneamino] imidazole-4-carboxamide isomerase (244 aa).

Asp10 serves as the catalytic Proton acceptor. The Proton donor role is filled by Asp132.

The protein belongs to the HisA/HisF family.

It localises to the cytoplasm. It carries out the reaction 1-(5-phospho-beta-D-ribosyl)-5-[(5-phospho-beta-D-ribosylamino)methylideneamino]imidazole-4-carboxamide = 5-[(5-phospho-1-deoxy-D-ribulos-1-ylimino)methylamino]-1-(5-phospho-beta-D-ribosyl)imidazole-4-carboxamide. It participates in amino-acid biosynthesis; L-histidine biosynthesis; L-histidine from 5-phospho-alpha-D-ribose 1-diphosphate: step 4/9. The sequence is that of 1-(5-phosphoribosyl)-5-[(5-phosphoribosylamino)methylideneamino] imidazole-4-carboxamide isomerase from Xanthomonas euvesicatoria pv. vesicatoria (strain 85-10) (Xanthomonas campestris pv. vesicatoria).